A 78-amino-acid polypeptide reads, in one-letter code: Omega-conotoxin-like 2 (78 aa).

Residues 1–22 form the signal peptide; sequence MKLTCVVIVAVLLLTACQLITA. The propeptide occupies 23-42; that stretch reads DDSRGTQKHRSLRSTTKVSK. 3 disulfide bridges follow: C46–C62, C53–C65, and C61–C72.

It belongs to the conotoxin O1 superfamily. As to expression, expressed by the venom duct.

The protein localises to the secreted. Functionally, omega-conotoxins act at presynaptic membranes, they bind and block voltage-gated calcium channels (Cav). The sequence is that of Omega-conotoxin-like 2 from Conus striatus (Striated cone).